Reading from the N-terminus, the 135-residue chain is MLLLRWFTSCCLWVFGLGQLEQTELSVTRETDENVQISCIVYLPYFSNTAIHWYRQKTNQQFEYLIYVATNYNQRPLGGKHKKIEASKDFKSSTSTLEINYLKKEDEATYYCAVWMRWSSGFHKVFAEGTKLIVI.

The signal sequence occupies residues 1 to 18 (MLLLRWFTSCCLWVFGLG). Residues 19 to 116 (QLEQTELSVT…EATYYCAVWM (98 aa)) are v segment. Residues 117–135 (RWSSGFHKVFAEGTKLIVI) form a j segment region.

In Mus musculus (Mouse), this protein is T-cell receptor gamma chain V region V108A.